A 473-amino-acid polypeptide reads, in one-letter code: Zinc finger and BTB domain-containing protein 9 (473 aa).

Positions 48–112 (CDVSLLVQGR…IYSGRLRLPL (65 aa)) constitute a BTB domain. Positions 177–279 (QTPVQSSAST…LELPAPPALP (103 aa)) are disordered. The span at 182–196 (SSASTESPASTESPV) shows a compositional bias: low complexity. Over residues 211 to 226 (VEEEEEEEEDDDDEDQ) the composition is skewed to acidic residues. Over residues 227–239 (GSATLSQTPQPQR) the composition is skewed to polar residues. A Glycyl lysine isopeptide (Lys-Gly) (interchain with G-Cter in SUMO1); alternate cross-link involves residue lysine 286. Lysine 286 participates in a covalent cross-link: Glycyl lysine isopeptide (Lys-Gly) (interchain with G-Cter in SUMO2); alternate. Residues lysine 293 and lysine 307 each participate in a glycyl lysine isopeptide (Lys-Gly) (interchain with G-Cter in SUMO2) cross-link. A disordered region spans residues 293-376 (KEEISGSGTQ…VHGPVKLGGT (84 aa)). Gly residues predominate over residues 355–364 (SGGGGPGGAG). Residue lysine 382 forms a Glycyl lysine isopeptide (Lys-Gly) (interchain with G-Cter in SUMO2) linkage. The C2H2-type 1 zinc finger occupies 411–433 (FGCGICNKRFKLKHHLTEHMKTH). Residues 438-460 (HACPHCGRRFRVHACFLRHRDLC) form a C2H2-type 2; atypical zinc finger.

Its subcellular location is the nucleus. May be involved in transcriptional regulation. The chain is Zinc finger and BTB domain-containing protein 9 (ZBTB9) from Homo sapiens (Human).